We begin with the raw amino-acid sequence, 377 residues long: 23S rRNA (uracil(747)-C(5))-methyltransferase RlmC (377 aa).

[4Fe-4S] cluster-binding residues include Cys-3, Cys-11, Cys-14, and Cys-87. The S-adenosyl-L-methionine site is built by Gln-212, Phe-241, Glu-262, and Asn-307. The active-site Nucleophile is the Cys-334.

Belongs to the class I-like SAM-binding methyltransferase superfamily. RNA M5U methyltransferase family. RlmC subfamily.

The catalysed reaction is uridine(747) in 23S rRNA + S-adenosyl-L-methionine = 5-methyluridine(747) in 23S rRNA + S-adenosyl-L-homocysteine + H(+). Catalyzes the formation of 5-methyl-uridine at position 747 (m5U747) in 23S rRNA. The chain is 23S rRNA (uracil(747)-C(5))-methyltransferase RlmC from Photorhabdus laumondii subsp. laumondii (strain DSM 15139 / CIP 105565 / TT01) (Photorhabdus luminescens subsp. laumondii).